A 192-amino-acid polypeptide reads, in one-letter code: Shikimate kinase (192 aa).

27–32 (GTGKTT) provides a ligand contact to ATP. A Mg(2+)-binding site is contributed by Thr-31. Substrate is bound by residues Asp-49, Arg-73, and Gly-95. An ATP-binding site is contributed by Arg-133. Substrate is bound at residue Arg-152.

It belongs to the shikimate kinase family. In terms of assembly, monomer. Mg(2+) serves as cofactor.

It is found in the cytoplasm. The enzyme catalyses shikimate + ATP = 3-phosphoshikimate + ADP + H(+). It participates in metabolic intermediate biosynthesis; chorismate biosynthesis; chorismate from D-erythrose 4-phosphate and phosphoenolpyruvate: step 5/7. Catalyzes the specific phosphorylation of the 3-hydroxyl group of shikimic acid using ATP as a cosubstrate. In Hahella chejuensis (strain KCTC 2396), this protein is Shikimate kinase.